A 363-amino-acid polypeptide reads, in one-letter code: Probable iron/ascorbate oxidoreductase DDB_G0283291 (363 aa).

Positions 197–306 (IFNYPSIISS…RISFPLFFDP (110 aa)) constitute a Fe2OG dioxygenase domain. Fe cation is bound by residues H230, D232, and H286. R297 provides a ligand contact to 2-oxoglutarate.

This sequence belongs to the iron/ascorbate-dependent oxidoreductase family. Fe(2+) serves as cofactor.

The sequence is that of Probable iron/ascorbate oxidoreductase DDB_G0283291 from Dictyostelium discoideum (Social amoeba).